A 457-amino-acid polypeptide reads, in one-letter code: MRNKVRKIHMIGIGGSGMSGIAEVLLNLGYEVSGSDLSMSQTVRRLGSLGASIAIGHGRENLGDADVVVKSTAVTSDNPEVVVARERGIPVIPRAEMLAELMRLRTGIAVAGTHGKTTTTSLLATIFTEAGYDPTVIIGGRLNAYGAGARLGQGEYLIAEADESDGSFLCLSPIASVVTNVDADHLDHYDGIEAIDDAFVDFLNNIPFYGVNVVCLDDPGVARILPRVNRPILTYGFSDKARLRGRIIDSGAMSCFEVSLDGKRLGEMRLNHPGRHNVLNALGAIGVSLEVGIPLGTIAEALAKFAGVGRRFERKGEKDGVVVVDDYGHHPAEIKATLATARAVYPERRLVVAFQPHRFSRTKALFGDFCTCFEAADELLLTEIYPASEAPIPGVSGESLGQGIRQVTKTKVAYYPDFAAMEAALPGILRPGDLFVTLGAGSIWQVGAHYLESERGA.

Residue G112–T118 participates in ATP binding.

Belongs to the MurCDEF family.

Its subcellular location is the cytoplasm. It carries out the reaction UDP-N-acetyl-alpha-D-muramate + L-alanine + ATP = UDP-N-acetyl-alpha-D-muramoyl-L-alanine + ADP + phosphate + H(+). It participates in cell wall biogenesis; peptidoglycan biosynthesis. Its function is as follows. Cell wall formation. In Solidesulfovibrio magneticus (strain ATCC 700980 / DSM 13731 / RS-1) (Desulfovibrio magneticus), this protein is UDP-N-acetylmuramate--L-alanine ligase.